The following is a 450-amino-acid chain: Akuammiline synthase 2 (450 aa).

Residue H154 is the Proton acceptor of the active site. The short motif at 218–225 (MRRFVFDA) is the Nuclear localization signal element. D376 functions as the Proton acceptor in the catalytic mechanism.

The protein belongs to the plant acyltransferase family. Monomer.

It is found in the cytoplasm. The protein resides in the nucleus. The catalysed reaction is rhazimol + acetyl-CoA = akuammiline + CoA + H(+). It participates in alkaloid biosynthesis. Functionally, acyltransferase involved in the biosynthesis of akuammilan monoterpene indole alkaloids (MIAs) natural products, components with various biological properties such as antidiabetic, antibacterial, anti-inflammatory, anticancer, and antimalarial activities. Catalyzes the conversion of rhazimol to akuammiline. This chain is Akuammiline synthase 2, found in Alstonia scholaris (Dogbane).